The following is a 95-amino-acid chain: MALVRSLFVSNKILGGSLAGMRKSTSAPKGFLAVYVGESQKKQRYLVLVSYLSQPLFQDLLSKSEEEFGFDHPMGGLTIPCPEDTFLTVTSRIQG.

This sequence belongs to the ARG7 family. As to quaternary structure, interacts with PP2C-D1. Higher expression in thermo-responsive cultivars (e.g. cv. Alst-1, cv. Ang-0 and cv. Com-0) than in low thermo-responsive cultivars (e.g. cv. Dja-1, cv. El-0 and cv. Kon).

The protein resides in the cell membrane. Its function is as follows. Functions as a positive effector of cell expansion through modulation of auxin transport. Involved in thermo-responsiveness of plant architecture. Enhances plasma membrane H(+)-ATPase. This chain is Auxin-responsive protein SAUR27, found in Arabidopsis thaliana (Mouse-ear cress).